The sequence spans 84 residues: MRVKIKCWNGVATWLWVANDENCGICRMAFNGCCPDCKVPGDDCPLVWGQCSHCFHMHCILKWLNAQQVQQHCPMCRQEWKFKE.

Residues cysteine 23, cysteine 26, cysteine 34, cysteine 37, cysteine 44, cysteine 51, histidine 53, histidine 56, histidine 58, cysteine 59, cysteine 73, and cysteine 76 each contribute to the Zn(2+) site. Residues 34-77 (CPDCKVPGDDCPLVWGQCSHCFHMHCILKWLNAQQVQQHCPMCR) form an RING-type zinc finger.

The protein belongs to the RING-box family. The mammalian APC/C is composed at least of 14 distinct subunits ANAPC1, ANAPC2, CDC27/APC3, ANAPC4, ANAPC5, CDC16/APC6, ANAPC7, CDC23/APC8, ANAPC10, ANAPC11, CDC26/APC12, ANAPC13, ANAPC15 and ANAPC16 that assemble into a complex of at least 19 chains with a combined molecular mass of around 1.2 MDa; APC/C interacts with FZR1 and FBXO5. Interacts with the cullin domain of ANAPC2. Interacts with UBE2D2. In terms of processing, auto-ubiquitinated.

The protein localises to the cytoplasm. Its subcellular location is the nucleus. It participates in protein modification; protein ubiquitination. Its function is as follows. Together with the cullin protein ANAPC2, constitutes the catalytic component of the anaphase promoting complex/cyclosome (APC/C), a cell cycle-regulated E3 ubiquitin ligase that controls progression through mitosis and the G1 phase of the cell cycle. The APC/C complex acts by mediating ubiquitination and subsequent degradation of target proteins: it mainly mediates the formation of 'Lys-11'-linked polyubiquitin chains and, to a lower extent, the formation of 'Lys-48'- and 'Lys-63'-linked polyubiquitin chains. The APC/C complex catalyzes assembly of branched 'Lys-11'-/'Lys-48'-linked branched ubiquitin chains on target proteins. May recruit the E2 ubiquitin-conjugating enzymes to the complex. This Bos taurus (Bovine) protein is Anaphase-promoting complex subunit 11 (ANAPC11).